Reading from the N-terminus, the 605-residue chain is Golgi-associated RAB2 interactor protein 3 (605 aa).

2 disordered regions span residues 234 to 265 (GEGIQHASHGTASAASPSTSTPGAAEGGAART) and 407 to 529 (YMSE…ALQK). The span at 239–265 (HASHGTASAASPSTSTPGAAEGGAART) shows a compositional bias: low complexity. Residues 434–457 (KKDRHPSRKSSHHRKAGESHRRRA) are compositionally biased toward basic residues. A Bipartite nuclear localization signal motif is present at residues 441 to 458 (RKSSHHRKAGESHRRRAG). The segment covering 463–473 (KASSHRSASGH) has biased composition (polar residues). Residues 475 to 484 (NTRDDKKEKG) are compositionally biased toward basic and acidic residues. The span at 489–500 (RGKRHGSSRKSS) shows a compositional bias: basic residues. Polar residues predominate over residues 513–526 (QELGKNQSASSTGA). Position 592 is a phosphoserine (Ser-592).

Belongs to the GARIN family. As to quaternary structure, interacts (via N-terminus) with RAB2B (in GTP-bound form). Interacts with FRG1. Expressed in adult spermatocytes and spermatids (at protein level).

The protein resides in the golgi apparatus. It localises to the nucleus. It is found in the cajal body. Functionally, may be involved in RNA biogenesis. This is Golgi-associated RAB2 interactor protein 3 from Homo sapiens (Human).